The chain runs to 90 residues: Phenol 2-monooxygenase, stimulatory component DmpM (90 aa).

This sequence belongs to the TmoD/XamoD family. As to quaternary structure, active as a monomer. Formation of dimers inactivates the protein. The multicomponent enzyme phenol hydroxylase is formed by DmpL (P1 component), DmpM (P2 component), DmpN (P3 component), DmpO (P4 component) and DmpP (P5 component).

It carries out the reaction phenol + NADH + O2 + H(+) = catechol + NAD(+) + H2O. The protein operates within aromatic compound metabolism; phenol degradation. Its function is as follows. Part of a multicomponent enzyme which catalyzes the degradation of phenol and some of its methylated derivatives. DmpM is a regulatory subunit that stimulates the phenol hydroxylase activity of the complex. The steady-state rate of phenol hydroxylase turnover is dependent on the DmpM concentration, with a maximum observed rate at about 1.5 DmpM per oxygenase monomer. Higher concentrations of DmpM inhibit phenol hydroxylase activity. May act by altering the redox potential of the oxygenase. Required for growth on phenol and for in vitro phenol hydroxylase activity. In Pseudomonas sp. (strain CF600), this protein is Phenol 2-monooxygenase, stimulatory component DmpM.